Here is a 139-residue protein sequence, read N- to C-terminus: Prefoldin subunit alpha (139 aa).

Belongs to the prefoldin subunit alpha family. In terms of assembly, heterohexamer of two alpha and four beta subunits.

Its subcellular location is the cytoplasm. Molecular chaperone capable of stabilizing a range of proteins. Seems to fulfill an ATP-independent, HSP70-like function in archaeal de novo protein folding. The protein is Prefoldin subunit alpha of Picrophilus torridus (strain ATCC 700027 / DSM 9790 / JCM 10055 / NBRC 100828 / KAW 2/3).